A 567-amino-acid polypeptide reads, in one-letter code: Dynein, 70 kDa intermediate chain, flagellar outer arm (567 aa).

WD repeat units follow at residues 214–254 (VPTS…GPVE), 261–302 (SHRD…ECVE), 360–399 (GHHGPIYGLRRNPFNSKYFLSIGDWTARVWVEDTAVKTPI), and 404–444 (YHPT…NEPT).

The protein belongs to the dynein intermediate chain family. Consists of at least 3 heavy chains (alpha, beta and gamma), 2 intermediate chains and 8 light chains.

Its subcellular location is the cytoplasm. It localises to the cytoskeleton. The protein resides in the flagellum axoneme. In terms of biological role, may play a role in regulating dynein heavy chain (DHC) activity. May function in holding IC78 to the DHC, or in stabilizing the entire dynein complex. In Chlamydomonas reinhardtii (Chlamydomonas smithii), this protein is Dynein, 70 kDa intermediate chain, flagellar outer arm (ODA6).